The primary structure comprises 271 residues: GPN-loop GTPase 3 (271 aa).

13–18 is a binding site for GTP; the sequence is GAGKST. A Gly-Pro-Asn (GPN)-loop; involved in dimer interface motif is present at residues 70 to 72; sequence GPN. Residue 173–176 coordinates GTP; sequence SKVD.

The protein belongs to the GPN-loop GTPase family. In terms of assembly, heterodimers with GPN1 or GPN2. Binds to RNA polymerase II (RNAPII).

In terms of biological role, small GTPase required for proper nuclear import of RNA polymerase II and III (RNAPII and RNAPIII). May act at an RNAP assembly step prior to nuclear import. The polypeptide is GPN-loop GTPase 3 (Eremothecium gossypii (strain ATCC 10895 / CBS 109.51 / FGSC 9923 / NRRL Y-1056) (Yeast)).